We begin with the raw amino-acid sequence, 534 residues long: Pentatricopeptide repeat-containing protein At5g50990 (534 aa).

PPR repeat units follow at residues 128–158 (NVIT…MLSF), 164–198 (NKFS…GIEL), 199–229 (NAIL…VKRN), 230–264 (DVSI…HVSP), 265–295 (DSIT…MSRR), and 301–331 (KLEH…MPIE). Positions 336 to 408 (IWRSLLSSSR…AKGKSWLEFG (73 aa)) are type E motif. A type E(+) motif region spans residues 409-439 (GMIHRFKAGDTSHIETKAIYKVLEGLIQKTK). The type DYW motif stretch occupies residues 440-534 (SQGFVSDTDL…DGLCSCRDYW (95 aa)).

It belongs to the PPR family. PCMP-H subfamily.

The chain is Pentatricopeptide repeat-containing protein At5g50990 (PCMP-H59) from Arabidopsis thaliana (Mouse-ear cress).